Here is an 891-residue protein sequence, read N- to C-terminus: Receptor-like protein 50 (891 aa).

A signal peptide spans 1 to 22 (MITIIWSLCLIFCLSNSILVIA). Residues 23-849 (KDLCLPDQRD…KEEKDKGLSW (827 aa)) are Extracellular-facing. Residues N62 and N98 are each glycosylated (N-linked (GlcNAc...) asparagine). LRR repeat units lie at residues 105-130 (QHLQSLDLSYNDLSCTLPDSSGNFKY), 132-152 (RVLNLLGCNLFGEIPTSLRSL), 153-176 (SYLTDLDLSYNDDLTGEILDSMGN), 177-201 (LKHLRVLSLTSCKFTGKIPSSLGNL), 203-225 (YLTDLDLSWNYFTGELPDSMGNL), 226-249 (KSLRVLNLHRCNFFGKIPTSLGSL), and 250-272 (SNLTDLDISKNEFTSEGPDSMSS). A glycan (N-linked (GlcNAc...) asparagine) is linked at N200. Residues N251, N285, and N306 are each glycosylated (N-linked (GlcNAc...) asparagine). 4 LRR repeats span residues 286-309 (LSSLTNVDLSSNQFKAMLPSNMSS), 310-334 (LSKLEAFDISGNSFSGTIPSSLFML), 336-358 (SLIKLDLGTNDFSGPLKIGNISS), and 359-383 (PSNLQELYIGENNINGPIPRSILKL). The N-linked (GlcNAc...) asparagine glycan is linked to N355. Residues 384-407 (VGLSALSLSFWDTGGIVDFSIFLQ) form an LRR 12; degenerate repeat. LRR repeat units lie at residues 408 to 436 (LKSLRSLDLSGINLNISSSHHLPSHMMHL), 438 to 453 (LSSCNISQFPKFLENQ), 454 to 477 (TSLYHLDISANQIEGQVPEWLWRL), 478 to 504 (PTLRYVNIAQNAFSGELTMLPNPIYSF), 506 to 519 (ASDNKFSGEIPRAV), 520 to 544 (CEIGTLVLSNNNFSGSIPPCFEISN), 545 to 568 (KTLSILHLRNNSLSGVIPEESLHG), 570 to 591 (LRSLDVGSNRLSGQFPKSLINC), 593 to 614 (YLQFLNVEENRINDTFPSWLKS), 615 to 641 (LPNLQLLVLRSNEFHGPIFSPGDSLSF), 642 to 665 (SKLRFFDISENRFSGVLPSDYFVG), 712 to 736 (FEIYKTIDVSGNRLEGDIPESIGIL), 737 to 760 (KELIVLNMSNNAFTGHIPPSLSNL), 761 to 784 (SNLQSLDLSQNRLSGSIPGELGEL), and 786 to 809 (FLARMNFSYNMLEGPIPQGTQIQS). N422, N442, and N452 each carry an N-linked (GlcNAc...) asparagine glycan. Residues N531, N544, N554, N590, and N605 are each glycosylated (N-linked (GlcNAc...) asparagine). Residues N743 and N759 are each glycosylated (N-linked (GlcNAc...) asparagine). N791 and N811 each carry an N-linked (GlcNAc...) asparagine glycan. The helical transmembrane segment at 850 to 870 (VAAAIGYVPGLFCGLAIGHIL) threads the bilayer. Over 871–891 (TSYKRDWFMRIFSCFSSPLKK) the chain is Cytoplasmic.

It belongs to the RLP family.

It localises to the cell membrane. This is Receptor-like protein 50 from Arabidopsis thaliana (Mouse-ear cress).